A 404-amino-acid polypeptide reads, in one-letter code: Argininosuccinate synthase (404 aa).

ATP-binding positions include 9–17 (AYSGGLDTS) and A36. Position 87 (Y87) interacts with L-citrulline. G117 lines the ATP pocket. The L-aspartate site is built by T119, N123, and D124. An L-citrulline-binding site is contributed by N123. L-citrulline is bound by residues R127, S176, and E261.

This sequence belongs to the argininosuccinate synthase family. Type 1 subfamily. Homotetramer.

It localises to the cytoplasm. The enzyme catalyses L-citrulline + L-aspartate + ATP = 2-(N(omega)-L-arginino)succinate + AMP + diphosphate + H(+). It functions in the pathway amino-acid biosynthesis; L-arginine biosynthesis; L-arginine from L-ornithine and carbamoyl phosphate: step 2/3. This is Argininosuccinate synthase from Burkholderia pseudomallei (strain K96243).